The following is a 273-amino-acid chain: NADPH-dependent 7-cyano-7-deazaguanine reductase (273 aa).

81-83 (VES) is a substrate binding site. 83 to 84 (SK) contacts NADPH. The active-site Thioimide intermediate is the C179. The Proton donor role is filled by D186. 218-219 (AE) serves as a coordination point for substrate. Residue 247 to 248 (RG) participates in NADPH binding.

Belongs to the GTP cyclohydrolase I family. QueF type 2 subfamily. As to quaternary structure, homodimer.

The protein localises to the cytoplasm. The catalysed reaction is 7-aminomethyl-7-carbaguanine + 2 NADP(+) = 7-cyano-7-deazaguanine + 2 NADPH + 3 H(+). It participates in tRNA modification; tRNA-queuosine biosynthesis. Its function is as follows. Catalyzes the NADPH-dependent reduction of 7-cyano-7-deazaguanine (preQ0) to 7-aminomethyl-7-deazaguanine (preQ1). The chain is NADPH-dependent 7-cyano-7-deazaguanine reductase from Rickettsia canadensis (strain McKiel).